Consider the following 392-residue polypeptide: MASSLVSRPHLTQRPVRAATLASATRPRLAAGALSGRCQAQAAGDLDDAHYMRRCVELARKAAGHTSPNPMVGCVIVRDGRVVGEGFHPKAGQPHAEVFALRDAGNLAENATAYVSLEPCNHYGRTPPCTEALINAKVKEVVVGMTDPNPIVASKGIEKLQGAGISVRVGVEEALCRKLNEAYIHRMLTGKAFATLRATLSMNGIITNQIGKGADQSGGYYSQLMKEYDGVIISSDLAKMSALPLSREAGTNQPLCIIIAQGESSRLHIPSLSQEHASRAIVLADSPVTVEPAGVEVAVFRQIDLESILQLLAQRGLCSVLVDFREAGESFASLLNDFQEDKLVQKVVVEVLPFWLASDGLSNLAFGGSQSFPLKNLELRDVNGSVLLEGYV.

Residues 1–26 (MASSLVSRPHLTQRPVRAATLASATR) constitute a chloroplast transit peptide. In terms of domain architecture, CMP/dCMP-type deaminase spans 46-168 (LDDAHYMRRC…KLQGAGISVR (123 aa)). A Zn(2+)-binding site is contributed by H95. The Proton donor role is filled by E97. Residues C120 and C129 each contribute to the Zn(2+) site.

Requires Zn(2+) as cofactor.

The protein resides in the plastid. It localises to the chloroplast. The enzyme catalyses 2,5-diamino-6-hydroxy-4-(5-phosphoribosylamino)-pyrimidine + H2O + H(+) = 5-amino-6-(5-phospho-D-ribosylamino)uracil + NH4(+). It participates in cofactor biosynthesis; riboflavin biosynthesis; 5-amino-6-(D-ribitylamino)uracil from GTP: step 2/4. Functionally, monofunctional pyrimidine deaminase involved in the riboflavin biosynthesis pathway. Also has a reductase domain that lacks catalytically essential substrate-binding residues. This chain is Riboflavin biosynthesis protein PYRD, chloroplastic (PYRD), found in Zea mays (Maize).